Reading from the N-terminus, the 254-residue chain is 14-3-3-like protein RA215 (254 aa).

The protein belongs to the 14-3-3 family.

In Solanum tuberosum (Potato), this protein is 14-3-3-like protein RA215.